The primary structure comprises 312 residues: tRNA dimethylallyltransferase (312 aa).

10–17 (GPTAVGKT) is a binding site for ATP. 12–17 (TAVGKT) is a substrate binding site. An interaction with substrate tRNA region spans residues 35–38 (DSMQ).

This sequence belongs to the IPP transferase family. Monomer. Requires Mg(2+) as cofactor.

The enzyme catalyses adenosine(37) in tRNA + dimethylallyl diphosphate = N(6)-dimethylallyladenosine(37) in tRNA + diphosphate. Its function is as follows. Catalyzes the transfer of a dimethylallyl group onto the adenine at position 37 in tRNAs that read codons beginning with uridine, leading to the formation of N6-(dimethylallyl)adenosine (i(6)A). The protein is tRNA dimethylallyltransferase of Alkaliphilus metalliredigens (strain QYMF).